Reading from the N-terminus, the 330-residue chain is DNA-directed RNA polymerase subunit alpha (330 aa).

The alpha N-terminal domain (alpha-NTD) stretch occupies residues 1–231 (MALFNFQKPD…IHHFMLFSDE (231 aa)). The alpha C-terminal domain (alpha-CTD) stretch occupies residues 253–330 (MRQLLKTKLV…DLAKYKLDKE (78 aa)).

Belongs to the RNA polymerase alpha chain family. Homodimer. The RNAP catalytic core consists of 2 alpha, 1 beta, 1 beta' and 1 omega subunit. When a sigma factor is associated with the core the holoenzyme is formed, which can initiate transcription.

The catalysed reaction is RNA(n) + a ribonucleoside 5'-triphosphate = RNA(n+1) + diphosphate. In terms of biological role, DNA-dependent RNA polymerase catalyzes the transcription of DNA into RNA using the four ribonucleoside triphosphates as substrates. The polypeptide is DNA-directed RNA polymerase subunit alpha (Flavobacterium psychrophilum (strain ATCC 49511 / DSM 21280 / CIP 103535 / JIP02/86)).